The chain runs to 210 residues: Regulator of G-protein signaling 17 (210 aa).

The disordered stretch occupies residues 1–21 (MRKRQQSQNEGTPAVSQAPGN). Residues 84 to 200 (NFDKMMKAPA…LNSQIYKSFV (117 aa)) enclose the RGS domain. Tyr-137 carries the phosphotyrosine modification.

Interacts with GNAI1 and GNAQ. Interacts with GNAZ and GNAI2. Interacts with OPRM1. Forms a complex with mu-opioid receptors and G(alpha)z/i2 subunits, including GNAZ and GNAI2; the formation of this complex results in mu-opioid receptor desensitization. Interacts with HINT1. N- and O-glycosylated in synapsomal membranes. In terms of processing, serine phosphorylated in synapsomal membranes. Post-translationally, sumoylated with SUMO1 and SUM02 in synaptosomes. The sumoylated forms act as a scaffold for sequestering mu-opioid receptor-activated G(alpha) subunits. Desumoylated by HINT1. Predominantly expressed in the cerebellum. Also expressed in the cortex and medulla. Weakly expressed in a number of peripheral tissues notably spleen, lung and leukocytes.

Its subcellular location is the membrane. The protein localises to the synapse. It is found in the synaptosome. The protein resides in the nucleus. It localises to the cytoplasm. Functionally, regulates G protein-coupled receptor signaling cascades, including signaling via muscarinic acetylcholine receptor CHRM2 and dopamine receptor DRD2. Inhibits signal transduction by increasing the GTPase activity of G protein alpha subunits, thereby driving them into their inactive GDP-bound form. Binds selectively to GNAZ and GNAI2 subunits, accelerates their GTPase activity and regulates their signaling activities. Negatively regulates mu-opioid receptor-mediated activation of the G-proteins. The protein is Regulator of G-protein signaling 17 (RGS17) of Homo sapiens (Human).